A 223-amino-acid chain; its full sequence is Deoxyribose-phosphate aldolase (223 aa).

Residue Asp-89 is the Proton donor/acceptor of the active site. Residue Lys-152 is the Schiff-base intermediate with acetaldehyde of the active site. Lys-181 acts as the Proton donor/acceptor in catalysis.

The protein belongs to the DeoC/FbaB aldolase family. DeoC type 1 subfamily.

Its subcellular location is the cytoplasm. It catalyses the reaction 2-deoxy-D-ribose 5-phosphate = D-glyceraldehyde 3-phosphate + acetaldehyde. Its pathway is carbohydrate degradation; 2-deoxy-D-ribose 1-phosphate degradation; D-glyceraldehyde 3-phosphate and acetaldehyde from 2-deoxy-alpha-D-ribose 1-phosphate: step 2/2. In terms of biological role, catalyzes a reversible aldol reaction between acetaldehyde and D-glyceraldehyde 3-phosphate to generate 2-deoxy-D-ribose 5-phosphate. The chain is Deoxyribose-phosphate aldolase from Listeria monocytogenes serotype 4a (strain HCC23).